A 165-amino-acid chain; its full sequence is Ribosome maturation factor RimM (165 aa).

Residues 94–165 (EDEFYIADLN…YVILNYQTKV (72 aa)) enclose the PRC barrel domain.

It belongs to the RimM family. Binds ribosomal protein uS19.

The protein localises to the cytoplasm. Its function is as follows. An accessory protein needed during the final step in the assembly of 30S ribosomal subunit, possibly for assembly of the head region. Essential for efficient processing of 16S rRNA. May be needed both before and after RbfA during the maturation of 16S rRNA. It has affinity for free ribosomal 30S subunits but not for 70S ribosomes. The polypeptide is Ribosome maturation factor RimM (Rickettsia typhi (strain ATCC VR-144 / Wilmington)).